The chain runs to 259 residues: Thiazole synthase (259 aa).

The active-site Schiff-base intermediate with DXP is the lysine 98. Residues glycine 159, 185-186 (AG), and 207-208 (NS) each bind 1-deoxy-D-xylulose 5-phosphate.

This sequence belongs to the ThiG family. As to quaternary structure, homotetramer. Forms heterodimers with either ThiH or ThiS.

Its subcellular location is the cytoplasm. The catalysed reaction is [ThiS sulfur-carrier protein]-C-terminal-Gly-aminoethanethioate + 2-iminoacetate + 1-deoxy-D-xylulose 5-phosphate = [ThiS sulfur-carrier protein]-C-terminal Gly-Gly + 2-[(2R,5Z)-2-carboxy-4-methylthiazol-5(2H)-ylidene]ethyl phosphate + 2 H2O + H(+). Its pathway is cofactor biosynthesis; thiamine diphosphate biosynthesis. Catalyzes the rearrangement of 1-deoxy-D-xylulose 5-phosphate (DXP) to produce the thiazole phosphate moiety of thiamine. Sulfur is provided by the thiocarboxylate moiety of the carrier protein ThiS. In vitro, sulfur can be provided by H(2)S. This chain is Thiazole synthase, found in Chlorobaculum tepidum (strain ATCC 49652 / DSM 12025 / NBRC 103806 / TLS) (Chlorobium tepidum).